The chain runs to 384 residues: Soluble hydrogenase, small subunit (384 aa).

N6-(pyridoxal phosphate)lysine is present on Lys194.

The protein belongs to the class-V pyridoxal-phosphate-dependent aminotransferase family. In terms of assembly, heterodimer of a large and a small subunit. Pyridoxal 5'-phosphate serves as cofactor.

It is found in the cytoplasm. Functionally, soluble hydrogenase catalyzes both production and consumption of hydrogen from suitable artificial electron donors or acceptors. This subunit catalyzes the tritium-exchange activity. The polypeptide is Soluble hydrogenase, small subunit (Synechococcus sp. (strain PCC 6716)).